Here is a 588-residue protein sequence, read N- to C-terminus: Adenine deaminase (588 aa).

This sequence belongs to the metallo-dependent hydrolases superfamily. Adenine deaminase family. Homodimer. It depends on Mn(2+) as a cofactor.

It catalyses the reaction adenine + H2O + H(+) = hypoxanthine + NH4(+). This is Adenine deaminase from Escherichia coli (strain SE11).